Here is a 213-residue protein sequence, read N- to C-terminus: ATP-dependent Clp protease proteolytic subunit (213 aa).

The Nucleophile role is filled by Ser-114. The active site involves His-139.

It belongs to the peptidase S14 family. As to quaternary structure, fourteen ClpP subunits assemble into 2 heptameric rings which stack back to back to give a disk-like structure with a central cavity, resembling the structure of eukaryotic proteasomes.

It is found in the cytoplasm. It carries out the reaction Hydrolysis of proteins to small peptides in the presence of ATP and magnesium. alpha-casein is the usual test substrate. In the absence of ATP, only oligopeptides shorter than five residues are hydrolyzed (such as succinyl-Leu-Tyr-|-NHMec, and Leu-Tyr-Leu-|-Tyr-Trp, in which cleavage of the -Tyr-|-Leu- and -Tyr-|-Trp bonds also occurs).. Its function is as follows. Cleaves peptides in various proteins in a process that requires ATP hydrolysis. Has a chymotrypsin-like activity. Plays a major role in the degradation of misfolded proteins. The protein is ATP-dependent Clp protease proteolytic subunit of Pseudomonas syringae pv. syringae (strain B728a).